A 125-amino-acid chain; its full sequence is Neuropeptide B (125 aa).

Residues 1-24 (MARSATLAAAALALCLLLAPPGLA) form the signal peptide. Residues 54 to 73 (RRSQPYRGAEPPGGAGASPE) are disordered. The propeptide occupies 56-125 (SQPYRGAEPP…SLRAADCLAA (70 aa)).

The protein belongs to the neuropeptide B/W family. As to expression, widely expressed in the central nervous system. High levels are found in substantia nigra, hypothalamus, hippocampus, spinal cord, placenta and fetal brain; lower levels are found in testis, uterus and ovary. Also detected at high levels in colorectal adenocarcinoma.

The protein localises to the secreted. In terms of biological role, may be involved in the regulation of feeding, neuroendocrine system, memory, learning and in the afferent pain pathway. The sequence is that of Neuropeptide B (NPB) from Homo sapiens (Human).